Reading from the N-terminus, the 24-residue chain is Brevinin-1SPc (24 aa).

Cysteines 18 and 24 form a disulfide.

In terms of tissue distribution, expressed by the skin glands.

Its subcellular location is the secreted. Antimicrobial peptide with activity against Gram-negative and Gram-positive bacteria and fungi. Also shows hemolytic activity. This Lithobates septentrionalis (Mink frog) protein is Brevinin-1SPc.